The primary structure comprises 89 residues: UPF0223 protein BCE_4008 (89 aa).

The protein belongs to the UPF0223 family.

This is UPF0223 protein BCE_4008 from Bacillus cereus (strain ATCC 10987 / NRS 248).